The sequence spans 174 residues: Eukaryotic translation elongation factor 1 epsilon-1 (174 aa).

A2 carries the post-translational modification N-acetylalanine. Positions 2–56 (AAAAELSLLEKSLGLSKGNKYSAQGERQIPVLQTNNGPSLTGLTTIAAHLVKQAN) are N-terminal. The GST C-terminal domain occupies 50–173 (HLVKQANKEY…FIKNRLYTNS (124 aa)). The linker stretch occupies residues 57–63 (KEYLLGS). A C-terminal region spans residues 64–152 (TAEEKAIVQQ…SRWFCHIQHY (89 aa)). Position 138 is an N6-acetyllysine (K138). Positions 153–169 (PGIRQHLSSVVFIKNRL) form a coiled coil.

Part of a multisubunit complex that groups tRNA ligases for Arg (RARS1), Asp (DARS1), Gln (QARS1), Ile (IARS1), Leu (LARS1), Lys (KARS1), Met (MARS1) the bifunctional ligase for Glu and Pro (EPRS1) and the auxiliary subunits AIMP1/p43, AIMP2/p38 and EEF1E1/p18. Can interact simultaneously with MARS1 and EPRS1. Forms a linear complex that contains MARS1, EEF1E1, EPRS1 and AIMP2 that is at the core of the multisubunit complex. Interacts with ATM and ATR. The interaction with ATM, which takes place independently of TP53, is induced by DNA damage that may occur during genotoxic stress or cell growth. The interaction with ATR is enhanced by UV irradiation. As to expression, down-regulated in various cancer tissues.

It localises to the cytoplasm. The protein resides in the cytosol. Its subcellular location is the nucleus. Functionally, positive modulator of ATM response to DNA damage. In Homo sapiens (Human), this protein is Eukaryotic translation elongation factor 1 epsilon-1 (EEF1E1).